The primary structure comprises 279 residues: Pantothenate synthetase (279 aa).

26 to 33 (MGNLHEGH) serves as a coordination point for ATP. His33 functions as the Proton donor in the catalytic mechanism. Gln57 is a (R)-pantoate binding site. A beta-alanine-binding site is contributed by Gln57. 144-147 (GKKD) is an ATP binding site. Position 150 (Gln150) interacts with (R)-pantoate. ATP-binding positions include Val173 and 181–184 (LSSR).

It belongs to the pantothenate synthetase family. Homodimer.

Its subcellular location is the cytoplasm. The catalysed reaction is (R)-pantoate + beta-alanine + ATP = (R)-pantothenate + AMP + diphosphate + H(+). The protein operates within cofactor biosynthesis; (R)-pantothenate biosynthesis; (R)-pantothenate from (R)-pantoate and beta-alanine: step 1/1. Catalyzes the condensation of pantoate with beta-alanine in an ATP-dependent reaction via a pantoyl-adenylate intermediate. The chain is Pantothenate synthetase from Burkholderia ambifaria (strain MC40-6).